Reading from the N-terminus, the 470-residue chain is UDP-N-acetylmuramoylalanine--D-glutamate ligase (470 aa).

120-126 lines the ATP pocket; that stretch reads GSNGKTT.

It belongs to the MurCDEF family.

Its subcellular location is the cytoplasm. It catalyses the reaction UDP-N-acetyl-alpha-D-muramoyl-L-alanine + D-glutamate + ATP = UDP-N-acetyl-alpha-D-muramoyl-L-alanyl-D-glutamate + ADP + phosphate + H(+). It functions in the pathway cell wall biogenesis; peptidoglycan biosynthesis. In terms of biological role, cell wall formation. Catalyzes the addition of glutamate to the nucleotide precursor UDP-N-acetylmuramoyl-L-alanine (UMA). The sequence is that of UDP-N-acetylmuramoylalanine--D-glutamate ligase from Nitrosomonas eutropha (strain DSM 101675 / C91 / Nm57).